Reading from the N-terminus, the 367-residue chain is Homoserine O-acetyltransferase (367 aa).

In terms of domain architecture, AB hydrolase-1 spans 44-350; it reads NVIMVEHAWT…AYGHDAFLLE (307 aa). Ser-150 (nucleophile) is an active-site residue. Arg-217 lines the substrate pocket. Residues Asp-311 and His-344 contribute to the active site. Substrate is bound at residue Asp-345.

The protein belongs to the AB hydrolase superfamily. MetX family. Homodimer.

It is found in the cytoplasm. It carries out the reaction L-homoserine + acetyl-CoA = O-acetyl-L-homoserine + CoA. The protein operates within amino-acid biosynthesis; L-methionine biosynthesis via de novo pathway; O-acetyl-L-homoserine from L-homoserine: step 1/1. Functionally, transfers an acetyl group from acetyl-CoA to L-homoserine, forming acetyl-L-homoserine. In vitro, can also use propionyl-CoA or butiryl-CoA as acyl donor. This is Homoserine O-acetyltransferase from Trichlorobacter lovleyi (strain ATCC BAA-1151 / DSM 17278 / SZ) (Geobacter lovleyi).